Here is a 432-residue protein sequence, read N- to C-terminus: D-amino acid dehydrogenase 1 (432 aa).

3-17 (VLVLGSGVIGTASAY) contacts FAD. Positions 410–432 (GLDISRYSNSPENAKNAHPAPAH) are disordered.

It belongs to the DadA oxidoreductase family. FAD serves as cofactor.

It carries out the reaction a D-alpha-amino acid + A + H2O = a 2-oxocarboxylate + AH2 + NH4(+). It participates in amino-acid degradation; D-alanine degradation; NH(3) and pyruvate from D-alanine: step 1/1. Catalyzes the oxidative deamination of D-amino acids. Has very broad substrate specificity; all the D-amino acids tested can be used as the substrate except D-Glu and D-Gln. Participates in the utilization of several D-amino acids as the sole source of nitrogen, i.e. D-alanine, D-histidine, D-phenylalanine, D-serine, D-threonine, and D-valine. The chain is D-amino acid dehydrogenase 1 (dadA1) from Pseudomonas aeruginosa (strain ATCC 15692 / DSM 22644 / CIP 104116 / JCM 14847 / LMG 12228 / 1C / PRS 101 / PAO1).